We begin with the raw amino-acid sequence, 1015 residues long: Condensin complex subunit 3 (1015 aa).

5 HEAT repeats span residues 94-131 (GLLN…SMPE), 138-173 (DVFD…QDPK), 174-212 (DDEC…TLPK), 238-275 (MRAM…GWLR), and 276-313 (FSEG…LSEL). Position 390 is a phosphoserine (Ser390). HEAT repeat units lie at residues 399-436 (EFIG…LPTI), 439-478 (SLVS…TVGV), and 617-654 (DFAR…TFGI). Ser674 is modified (phosphoserine). HEAT repeat units lie at residues 687–724 (ATAK…SGLL) and 865–907 (KDLL…QAEA). The residue at position 931 (Thr931) is a Phosphothreonine. Residues 941–950 (ASKSTQLKTN) are compositionally biased toward polar residues. The interval 941-994 (ASKSTQLKTNRGQRKVTVSARTNRRCQTAEADSESDHEVPEPESEMKMRLPRRA) is disordered. Residues Ser973, Ser975, Ser1002, and Ser1015 each carry the phosphoserine modification. Basic and acidic residues predominate over residues 974–988 (ESDHEVPEPESEMKM).

It belongs to the CND3 (condensin subunit 3) family. As to quaternary structure, component of the condensin complex, which contains the SMC2 and SMC4 heterodimer, and three non SMC subunits that probably regulate the complex: NCAPH/BRRN1, NCAPD2/CAPD2 and NCAPG. Post-translationally, phosphorylated by CDK1. Its phosphorylation, as well as that of NCAPD2 and NCAPH subunits, activates the condensin complex and is required for chromosome condensation. Highly expressed in testis.

The protein resides in the nucleus. The protein localises to the cytoplasm. It is found in the chromosome. Regulatory subunit of the condensin complex, a complex required for conversion of interphase chromatin into mitotic-like condense chromosomes. The condensin complex probably introduces positive supercoils into relaxed DNA in the presence of type I topoisomerases and converts nicked DNA into positive knotted forms in the presence of type II topoisomerases. The polypeptide is Condensin complex subunit 3 (NCAPG) (Homo sapiens (Human)).